Reading from the N-terminus, the 223-residue chain is Na(+)-translocating NADH-quinone reductase subunit D (223 aa).

A run of 5 helical transmembrane segments spans residues 42-62 (TVMAIALTLVTGFSNLFISMI), 66-86 (IPSSIRMIVQMVIIASLVIVV), 103-123 (VFVGLIITNCIVMGRAEAFAM), 131-151 (FFDGIGNGLGYSAMLLVLGFI), and 178-198 (NGLLLLPPSAFFLIGLIIWAL).

This sequence belongs to the NqrDE/RnfAE family. As to quaternary structure, composed of six subunits; NqrA, NqrB, NqrC, NqrD, NqrE and NqrF.

It localises to the cell inner membrane. It carries out the reaction a ubiquinone + n Na(+)(in) + NADH + H(+) = a ubiquinol + n Na(+)(out) + NAD(+). In terms of biological role, NQR complex catalyzes the reduction of ubiquinone-1 to ubiquinol by two successive reactions, coupled with the transport of Na(+) ions from the cytoplasm to the periplasm. NqrA to NqrE are probably involved in the second step, the conversion of ubisemiquinone to ubiquinol. This chain is Na(+)-translocating NADH-quinone reductase subunit D, found in Pseudomonas paraeruginosa (strain DSM 24068 / PA7) (Pseudomonas aeruginosa (strain PA7)).